A 493-amino-acid polypeptide reads, in one-letter code: Angiopoietin-related protein 2 (493 aa).

Residues 1–22 (MRPLCVTCWWLGLLAAMGAVAG) form the signal peptide. Coiled-coil stretches lie at residues 76-115 (PEVL…VDGG) and 152-206 (ALEL…HCQR). N-linked (GlcNAc...) asparagine glycosylation is found at N164 and N192. The region spanning 269 to 489 (DKPSGPWRDC…KVVMMIRPNP (221 aa)) is the Fibrinogen C-terminal domain. Disulfide bonds link C278–C307 and C430–C443.

Post-translationally, N-glycosylated. In terms of tissue distribution, widely expressed in heart, small intestine, spleen and stomach. Also found in lower levels in colon, ovary, adrenal gland, skeletal muscle and in prostate.

The protein localises to the secreted. Induces sprouting in endothelial cells through an autocrine and paracrine action. The sequence is that of Angiopoietin-related protein 2 (ANGPTL2) from Homo sapiens (Human).